The following is a 299-amino-acid chain: MTISDRHADAAEQARIVALALPYLRRYAGATIVVKYGGHAMGEESLAEEFGRDIALLKQVGINPVVVHGGGPQINAMLKRLAIQSTFVDGLRVTDAAMVEVVEMVLAGTVNKMVAGLINRAGALAVGICGKDGGLIRARKLTRTRRDPEGAIERALDLGFVGEPEHVDVRVIHALTGAGLIPVVAPVGVGADGATYNINADTVAGAIAGALGANRLLMLTDVAGVLDRNGKLIPDLSIAEVEALRADGTISGGMIPKVETCIEAVRQGVKGATIVDGRVPHACLLELFTEGGIGTLIHA.

Substrate is bound by residues 70–71 (GG), Arg92, and Asn197.

Belongs to the acetylglutamate kinase family. ArgB subfamily.

The protein localises to the cytoplasm. The catalysed reaction is N-acetyl-L-glutamate + ATP = N-acetyl-L-glutamyl 5-phosphate + ADP. It participates in amino-acid biosynthesis; L-arginine biosynthesis; N(2)-acetyl-L-ornithine from L-glutamate: step 2/4. Functionally, catalyzes the ATP-dependent phosphorylation of N-acetyl-L-glutamate. The protein is Acetylglutamate kinase of Acidiphilium cryptum (strain JF-5).